Reading from the N-terminus, the 719-residue chain is Catalase-3 (719 aa).

Residues 1 to 18 form the signal peptide; the sequence is MRVNALLPLSGLIGTALA. A propeptide spanning residues 19 to 30 is cleaved from the precursor; that stretch reads ACPFADPSALGR. Residues His-102 and Asn-175 contribute to the active site. Heme is bound at residue Tyr-389.

This sequence belongs to the catalase family. Heme is required as a cofactor.

It catalyses the reaction 2 H2O2 = O2 + 2 H2O. Functionally, occurs in almost all aerobically respiring organisms and serves to protect cells from the toxic effects of hydrogen peroxide. The chain is Catalase-3 (cat-3) from Neurospora crassa (strain ATCC 24698 / 74-OR23-1A / CBS 708.71 / DSM 1257 / FGSC 987).